Reading from the N-terminus, the 483-residue chain is Acyl-coenzyme A thioesterase 2, mitochondrial (483 aa).

Lys104 is modified (N6-acetyllysine). Catalysis depends on charge relay system residues Ser294, Asp388, and His422. Lys470 carries the N6-succinyllysine modification. Residues Ser481–Val483 carry the Microbody targeting signal motif.

The protein belongs to the C/M/P thioester hydrolase family. In terms of assembly, monomer. As to expression, strongest expression in heart, liver, muscle and kidney. Weak in placenta and pancreas.

The protein resides in the mitochondrion. The enzyme catalyses hexadecanoyl-CoA + H2O = hexadecanoate + CoA + H(+). It catalyses the reaction tetradecanoyl-CoA + H2O = tetradecanoate + CoA + H(+). It carries out the reaction octadecanoyl-CoA + H2O = octadecanoate + CoA + H(+). The catalysed reaction is eicosanoyl-CoA + H2O = eicosanoate + CoA + H(+). The enzyme catalyses decanoyl-CoA + H2O = decanoate + CoA + H(+). It catalyses the reaction dodecanoyl-CoA + H2O = dodecanoate + CoA + H(+). It carries out the reaction (9Z)-octadecenoyl-CoA + H2O = (9Z)-octadecenoate + CoA + H(+). The catalysed reaction is (9Z)-hexadecenoyl-CoA + H2O = (9Z)-hexadecenoate + CoA + H(+). The enzyme catalyses (9E)-octadecenoyl-CoA + H2O = (9E)-octadecenoate + CoA + H(+). It catalyses the reaction (9Z,12Z)-octadecadienoyl-CoA + H2O = (9Z,12Z)-octadecadienoate + CoA + H(+). It functions in the pathway lipid metabolism; fatty acid metabolism. Its function is as follows. Catalyzes the hydrolysis of acyl-CoAs into free fatty acids and coenzyme A (CoASH), regulating their respective intracellular levels. Displays higher activity toward long chain acyl CoAs (C14-C20). The enzyme is involved in enhancing the hepatic fatty acid oxidation in mitochondria. In Homo sapiens (Human), this protein is Acyl-coenzyme A thioesterase 2, mitochondrial (ACOT2).